The following is an 847-amino-acid chain: A-kinase anchor protein 4 (847 aa).

Positions 1–187 are excised as a propeptide; sequence MIAYCGTTKM…MAASKNTNNN (187 aa). Phosphoserine is present on residues Ser-95, Ser-129, Ser-189, and Ser-203. Residues 182–204 are compositionally biased toward polar residues; the sequence is KNTNNNQSPSNPATKSPSNQRSV. The interval 182-209 is disordered; the sequence is KNTNNNQSPSNPATKSPSNQRSVATPDG. Thr-206 carries the post-translational modification Phosphothreonine. Phosphoserine is present on residues Ser-212, Ser-225, and Ser-270. Residues 218-231 are interaction with Prkar1a and Prkar2a; that stretch reads YYVNRLSSLVIQMA. Tyr-300 is modified (phosphotyrosine). Residues Ser-301, Ser-304, Ser-340, Ser-430, Ser-441, Ser-443, Ser-462, Ser-491, Ser-496, and Ser-503 each carry the phosphoserine modification. A PKA-RI subunit binding domain region spans residues 334 to 343; that stretch reads YANQVASDMM. Thr-505 carries the phosphothreonine modification. Residues 511 to 536 are disordered; that stretch reads KQGTQGRVPNKVCPSKDEKREKISPS. Basic and acidic residues predominate over residues 524–533; sequence PSKDEKREKI. Phosphoserine occurs at positions 536 and 581. The tract at residues 583 to 613 is disordered; sequence QYEKSGGGQSSKSLSMKHFESRGAPGPSTCA. Phosphoserine is present on residues Ser-626, Ser-631, Ser-648, Ser-650, Ser-674, Ser-677, Ser-700, and Ser-729. Positions 655 to 677 are disordered; that stretch reads CCDSRSKQAAPVAKRPEDQSQDS.

It belongs to the AKAP110 family. Interacts with PRKAR1A and PRKAR2A. Interacts with ENO4. Interacts with QRICH2. Phosphorylated by STK33 during sperm flagella assembly. Expressed in flagella of epididymal sperm.

Its subcellular location is the cell projection. The protein resides in the cilium. The protein localises to the flagellum. Major structural component of sperm fibrous sheath. May play a role in sperm motility. This Rattus norvegicus (Rat) protein is A-kinase anchor protein 4.